The following is a 193-amino-acid chain: Imidazoleglycerol-phosphate dehydratase (193 aa).

This sequence belongs to the imidazoleglycerol-phosphate dehydratase family.

The protein resides in the cytoplasm. It carries out the reaction D-erythro-1-(imidazol-4-yl)glycerol 3-phosphate = 3-(imidazol-4-yl)-2-oxopropyl phosphate + H2O. It participates in amino-acid biosynthesis; L-histidine biosynthesis; L-histidine from 5-phospho-alpha-D-ribose 1-diphosphate: step 6/9. In Saccharolobus islandicus (strain M.14.25 / Kamchatka #1) (Sulfolobus islandicus), this protein is Imidazoleglycerol-phosphate dehydratase.